Here is an 896-residue protein sequence, read N- to C-terminus: Translation initiation factor IF-2 (896 aa).

The segment covering 93-219 (VKRDPQEAER…RMAEENEKNW (127 aa)) has biased composition (basic and acidic residues). The segment at 93-307 (VKRDPQEAER…GSALQQGFQK (215 aa)) is disordered. Positions 256–271 (GRSRSSKAARPAKKGN) are enriched in basic residues. The segment covering 272–285 (KHAESKADREEARA) has biased composition (basic and acidic residues). Positions 395–564 (PRAPVVTIMG…LLQAEVLELK (170 aa)) constitute a tr-type G domain. The tract at residues 404-411 (GHVDHGKT) is G1. 404–411 (GHVDHGKT) is a binding site for GTP. Residues 429–433 (GITQH) form a G2 region. Residues 450 to 453 (DTPG) are G3. Residues 450–454 (DTPGH) and 504–507 (NKID) each bind GTP. A G4 region spans residues 504–507 (NKID). The G5 stretch occupies residues 540–542 (SAK).

The protein belongs to the TRAFAC class translation factor GTPase superfamily. Classic translation factor GTPase family. IF-2 subfamily.

It is found in the cytoplasm. One of the essential components for the initiation of protein synthesis. Protects formylmethionyl-tRNA from spontaneous hydrolysis and promotes its binding to the 30S ribosomal subunits. Also involved in the hydrolysis of GTP during the formation of the 70S ribosomal complex. The polypeptide is Translation initiation factor IF-2 (Klebsiella pneumoniae (strain 342)).